Here is a 96-residue protein sequence, read N- to C-terminus: Co-chaperonin GroES (96 aa).

The protein belongs to the GroES chaperonin family. As to quaternary structure, heptamer of 7 subunits arranged in a ring. Interacts with the chaperonin GroEL.

It localises to the cytoplasm. In terms of biological role, together with the chaperonin GroEL, plays an essential role in assisting protein folding. The GroEL-GroES system forms a nano-cage that allows encapsulation of the non-native substrate proteins and provides a physical environment optimized to promote and accelerate protein folding. GroES binds to the apical surface of the GroEL ring, thereby capping the opening of the GroEL channel. This is Co-chaperonin GroES from Paraburkholderia phymatum (strain DSM 17167 / CIP 108236 / LMG 21445 / STM815) (Burkholderia phymatum).